The sequence spans 948 residues: Phosphatidylinositol-glycan-specific phospholipase D (948 aa).

The first 24 residues, 1 to 24 (MKNKIILLWLLLIVILCTISNVKG), serve as a signal peptide directing secretion. Residues N39, N78, N148, N300, N433, N452, N506, and N535 are each glycosylated (N-linked (GlcNAc...) asparagine). FG-GAP repeat units follow at residues 451 to 512 (TNFT…SVTI), 526 to 588 (QVAT…NPAG), 596 to 656 (LPSI…RISG), and 663 to 724 (DADY…LNSF). N749 and N788 each carry an N-linked (GlcNAc...) asparagine glycan. 2 FG-GAP repeats span residues 799 to 861 (NLLL…LTND) and 895 to 948 (SSGG…NIFQ).

It belongs to the GPLD1 family. Ca(2+) is required as a cofactor.

The protein resides in the secreted. The catalysed reaction is a 6-(alpha-D-glucosaminyl)-1-(1,2-diacyl-sn-glycero-3-phospho)-1D-myo-inositol + H2O = 6-(alpha-D-glucosaminyl)-1D-myo-inositol + a 1,2-diacyl-sn-glycero-3-phosphate + H(+). In terms of biological role, hydrolyzes the inositol phosphate linkage in proteins anchored by phosphatidylinositol glycans (GPI-anchor) thus releasing these proteins from the membrane. May also cleave GPI anchor intermediates intracellularly. This Dictyostelium discoideum (Social amoeba) protein is Phosphatidylinositol-glycan-specific phospholipase D (pldG).